A 263-amino-acid polypeptide reads, in one-letter code: Proteasome subunit alpha type-1 (263 aa).

N-acetylmethionine is present on Met-1. The residue at position 110 (Ser-110) is a Phosphoserine; alternate. O-linked (GlcNAc) serine; alternate glycosylation occurs at Ser-110. Lys-115 participates in a covalent cross-link: Glycyl lysine isopeptide (Lys-Gly) (interchain with G-Cter in ubiquitin). Phosphoserine is present on Ser-177. Lys-208 is covalently cross-linked (Glycyl lysine isopeptide (Lys-Gly) (interchain with G-Cter in ubiquitin)). The segment at 232–263 is disordered; that stretch reads FLEGLEERPQRKAQPAQPADEPAEKADEPMEH. The segment covering 253 to 263 has biased composition (basic and acidic residues); the sequence is PAEKADEPMEH.

Belongs to the peptidase T1A family. The 26S proteasome consists of a 20S proteasome core and two 19S regulatory subunits. The 20S proteasome core is a barrel-shaped complex made of 28 subunits that are arranged in four stacked rings. The two outer rings are each formed by seven alpha subunits, and the two inner rings are formed by seven beta subunits. The proteolytic activity is exerted by three beta-subunits PSMB5, PSMB6 and PSMB7. Interacts with NOTCH3. Interacts with ZFAND1.

The protein localises to the cytoplasm. It localises to the nucleus. In terms of biological role, component of the 20S core proteasome complex involved in the proteolytic degradation of most intracellular proteins. This complex plays numerous essential roles within the cell by associating with different regulatory particles. Associated with two 19S regulatory particles, forms the 26S proteasome and thus participates in the ATP-dependent degradation of ubiquitinated proteins. The 26S proteasome plays a key role in the maintenance of protein homeostasis by removing misfolded or damaged proteins that could impair cellular functions, and by removing proteins whose functions are no longer required. Associated with the PA200 or PA28, the 20S proteasome mediates ubiquitin-independent protein degradation. This type of proteolysis is required in several pathways including spermatogenesis (20S-PA200 complex) or generation of a subset of MHC class I-presented antigenic peptides (20S-PA28 complex). This chain is Proteasome subunit alpha type-1, found in Homo sapiens (Human).